Consider the following 359-residue polypeptide: DNA polymerase IV (359 aa).

In terms of domain architecture, UmuC spans 4-185 (IIHVDMDCFF…LALIKIPGVG (182 aa)). Mg(2+)-binding residues include Asp-8 and Asp-103. The active site involves Glu-104.

It belongs to the DNA polymerase type-Y family. As to quaternary structure, monomer. Mg(2+) serves as cofactor.

It is found in the cytoplasm. It carries out the reaction DNA(n) + a 2'-deoxyribonucleoside 5'-triphosphate = DNA(n+1) + diphosphate. Its function is as follows. Poorly processive, error-prone DNA polymerase involved in untargeted mutagenesis. Copies undamaged DNA at stalled replication forks, which arise in vivo from mismatched or misaligned primer ends. These misaligned primers can be extended by PolIV. Exhibits no 3'-5' exonuclease (proofreading) activity. May be involved in translesional synthesis, in conjunction with the beta clamp from PolIII. The sequence is that of DNA polymerase IV from Shewanella loihica (strain ATCC BAA-1088 / PV-4).